The primary structure comprises 306 residues: Pantothenate kinase (306 aa).

91–98 (GSVAVGKS) is a binding site for ATP.

This sequence belongs to the prokaryotic pantothenate kinase family.

Its subcellular location is the cytoplasm. It carries out the reaction (R)-pantothenate + ATP = (R)-4'-phosphopantothenate + ADP + H(+). The protein operates within cofactor biosynthesis; coenzyme A biosynthesis; CoA from (R)-pantothenate: step 1/5. This is Pantothenate kinase from Streptococcus pneumoniae (strain Hungary19A-6).